A 118-amino-acid polypeptide reads, in one-letter code: MARVKRGVIARTRHKKILKQAKGYYGARSRVYRVAFQAVIKAGQYAYRDRRQRKRQFRQLWIARINAAARQNGISYSKFINGLKKASVEIDRKILADIAVFDKVAFTALVEKAKAALA.

The protein belongs to the bacterial ribosomal protein bL20 family.

In terms of biological role, binds directly to 23S ribosomal RNA and is necessary for the in vitro assembly process of the 50S ribosomal subunit. It is not involved in the protein synthesizing functions of that subunit. The polypeptide is Large ribosomal subunit protein bL20 (Shigella dysenteriae serotype 1 (strain Sd197)).